The sequence spans 1342 residues: MVYSYTEKKRIRKDFGTRPQVLDIPYLLSIQLDSFDKFIEQDPEGQYGLEAAFRSVFPIQSYNGNSELQYVSYRLGEPVFDVKECQIRGVTYSKPLRVKLRLVIFDKDAPAGTVKDIKEQEVYMGEIPLMTDNGTFVINGTERVIVSQLHRSPGVFFDSDKGKTHSSGKVLYNARVIPYRGSWLDFEFDPKDNLYVRIDRRRKLPASIILRALGKSTEEILDIFFEKVNFEVKDQTLLMELVPDRLRGETASFDIESNGKVYVEQGRRVTARHIRQLEKDGVDHIEVPVEYIVGKVASKDYINEATGEIIVNANQEISLEALANLSQAGHKALEVLFTNDLDHGPFMSETLRIDSTVDRISALVEIYRMMRPGEPPTKEAAEALFESLFFSEERYDLSTVGRMKFNSSIGREDAQEQGTLDETDIIEVMKKLIAIRNGKGEVDDIDHLGNRRIRSVGEMAENQFRVGLVRVERAVKERLSLGDLDAVMPQDLINAKPISAAVKEFFGSSQLSQFMDQNNPLSEVTHKRRISALGPGGLTRERAGFEVRDVHVTHYGRLCPIETPEGPNIGLINSLSAFARCNEYGFLETPYRRVVDGVVTDEVDYLSAIEEGQFVIAQANAKLNEDGTFADELITARQKGESGLHPREHAQYMDVATNQVVSIAASLIPFLEHDDANRALMGANMQRQAVPTLKADKPLVGTGIERNVAVDSGVTAVAKRGGVIQSVDASRIVVKVNEEELVPGEAGIDIYNLTKYTRSNQNTCINQRPCVMPGEPVARGDVLADGPSTDLGELALGQNMRIAFMPWNGYNFEDSILVSERVVQEDRFTTIHIQELTCVARDTKLGSEEITADIPNVGESALSKLDESGIVYIGAEVKGGDILVGKVTPKGETQLTPEEKLLRAIFGEKASDVKDTSLRVPNSVSGTIIDVQVFTRDGVEKDKRALEIEQMQLKEAKKDLTEEFQILEGGLLNRVKAVLIEGGYSEAKLDATDRKKWLELTLEDDALQTQLEQLAEQWDELKADFDKKFETKRRKITQGDDLAPGVLKIVKVYLAVKRRIQPGDKMAGRHGNKGVISKINPVEDMPYDEKGQPVDIVLNPLGVPSRMNIGQILEVHLGLAAKGIGDKINQMVKEQQELAKFREFLQKVYDLGDTRQKVDIASLSDDEVRTLIKNLRGGLPIATPVFDGAPEASIKALLELADLPTSGQLTLFDGRTGDAFERPVTVGYMYMLKLNHLVDDKMHARSTGSYSLVTQQPLGGKAQFGGQRFGEMEVWALEAYGAAYTLQEMLTVKSDDVNGRTKMYKNIVDGNHSMEPGMPESFNVLLKEIRSLGINIELEDEE.

Belongs to the RNA polymerase beta chain family. The RNAP catalytic core consists of 2 alpha, 1 beta, 1 beta' and 1 omega subunit. When a sigma factor is associated with the core the holoenzyme is formed, which can initiate transcription.

It carries out the reaction RNA(n) + a ribonucleoside 5'-triphosphate = RNA(n+1) + diphosphate. DNA-dependent RNA polymerase catalyzes the transcription of DNA into RNA using the four ribonucleoside triphosphates as substrates. This is DNA-directed RNA polymerase subunit beta from Vibrio parahaemolyticus serotype O3:K6 (strain RIMD 2210633).